We begin with the raw amino-acid sequence, 273 residues long: Glutamate 5-kinase (273 aa).

ATP is bound at residue lysine 15. Substrate contacts are provided by serine 55, aspartate 142, and asparagine 158. ATP is bound by residues 178 to 179 (SD) and 220 to 226 (TGGMLSK).

It belongs to the glutamate 5-kinase family.

It localises to the cytoplasm. It catalyses the reaction L-glutamate + ATP = L-glutamyl 5-phosphate + ADP. The protein operates within amino-acid biosynthesis; L-proline biosynthesis; L-glutamate 5-semialdehyde from L-glutamate: step 1/2. Functionally, catalyzes the transfer of a phosphate group to glutamate to form L-glutamate 5-phosphate. The chain is Glutamate 5-kinase from Streptococcus pyogenes serotype M6 (strain ATCC BAA-946 / MGAS10394).